The chain runs to 498 residues: ATP synthase subunit alpha 1 (498 aa).

Residue 164–171 (GNRQSGKT) participates in ATP binding.

It belongs to the ATPase alpha/beta chains family. As to quaternary structure, F-type ATPases have 2 components, CF(1) - the catalytic core - and CF(0) - the membrane proton channel. CF(1) has five subunits: alpha(3), beta(3), gamma(1), delta(1), epsilon(1). CF(0) has three main subunits: a(1), b(2) and c(9-12). The alpha and beta chains form an alternating ring which encloses part of the gamma chain. CF(1) is attached to CF(0) by a central stalk formed by the gamma and epsilon chains, while a peripheral stalk is formed by the delta and b chains.

Its subcellular location is the cell membrane. It carries out the reaction ATP + H2O + 4 H(+)(in) = ADP + phosphate + 5 H(+)(out). Functionally, produces ATP from ADP in the presence of a proton gradient across the membrane. The alpha chain is a regulatory subunit. This Listeria welshimeri serovar 6b (strain ATCC 35897 / DSM 20650 / CCUG 15529 / CIP 8149 / NCTC 11857 / SLCC 5334 / V8) protein is ATP synthase subunit alpha 1.